The following is a 299-amino-acid chain: ATP phosphoribosyltransferase (299 aa).

The protein belongs to the ATP phosphoribosyltransferase family. Long subfamily. As to quaternary structure, equilibrium between an active dimeric form, an inactive hexameric form and higher aggregates. Interconversion between the various forms is largely reversible and is influenced by the natural substrates and inhibitors of the enzyme. The cofactor is Mg(2+).

Its subcellular location is the cytoplasm. It catalyses the reaction 1-(5-phospho-beta-D-ribosyl)-ATP + diphosphate = 5-phospho-alpha-D-ribose 1-diphosphate + ATP. It participates in amino-acid biosynthesis; L-histidine biosynthesis; L-histidine from 5-phospho-alpha-D-ribose 1-diphosphate: step 1/9. Feedback inhibited by histidine. Catalyzes the condensation of ATP and 5-phosphoribose 1-diphosphate to form N'-(5'-phosphoribosyl)-ATP (PR-ATP). Has a crucial role in the pathway because the rate of histidine biosynthesis seems to be controlled primarily by regulation of HisG enzymatic activity. In Klebsiella pneumoniae (strain 342), this protein is ATP phosphoribosyltransferase.